We begin with the raw amino-acid sequence, 530 residues long: Cation channel sperm-associated protein 2 (530 aa).

Residues 1–108 (MAAYQQEEQM…LWAGWVLECP (108 aa)) lie on the Cytoplasmic side of the membrane. The helical transmembrane segment at 109 to 131 (LFKNFIIFLVFLNTIILMVEIEL) threads the bilayer. At 132-140 (LESTNTKLW) the chain is on the extracellular side. A helical transmembrane segment spans residues 141–166 (PLKLTLEVAAWFILLIFILEILLKWL). Residues 167 to 175 (SNFSVFWKS) lie on the Cytoplasmic side of the membrane. The helical transmembrane segment at 176–200 (AWNVFDFVVTMLSLLPEVVVLVGVT) threads the bilayer. The Extracellular segment spans residues 201 to 203 (GQS). The chain crosses the membrane as a helical span at residues 204 to 222 (VWLQLLRICRVLRSLKLLA). Topologically, residues 223–239 (QFRQIQIIILVLVRALK) are cytoplasmic. Residues 240–262 (SMTFLLMLLLIFFYIFAVTGVYV) form a helical membrane-spanning segment. Residues 263–281 (FSEYTRSPRQDLEYHVFFS) lie on the Extracellular side of the membrane. The segment at residues 282 to 294 (DLPNSLVTVFILF) is an intramembrane region (helical; Pore-forming). Topologically, residues 295 to 314 (TLDHWYALLQDVWKVPEVSR) are extracellular. Residues 315–341 (IFSSIYFILWLLLGSIIFRSIIVAMMV) form a helical membrane-spanning segment. At 342–530 (TNFQNIRKEL…VQALMNLEDK (189 aa)) the chain is on the cytoplasmic side. Positions 378 to 458 (MSHEALTSSH…TSSSYSSSSE (81 aa)) are disordered. A compositionally biased stretch (basic and acidic residues) spans 429-440 (KTEETLSKKREY). A compositionally biased stretch (low complexity) spans 442–458 (SSSCVSSTSSSYSSSSE).

The protein belongs to the cation channel sperm-associated (TC 1.A.1.19) family. Component of the CatSper complex or CatSpermasome composed of the core pore-forming members CATSPER1, CATSPER2, CATSPER3 and CATSPER4 as well as auxiliary members CATSPERB, CATSPERG, CATSPERD, CATSPERE, CATSPERZ, C2CD6/CATSPERT, TMEM249, TMEM262 and EFCAB9. HSPA1 may be an additional auxiliary complex member. The core complex members CATSPER1, CATSPER2, CATSPER3 and CATSPER4 form a heterotetrameric channel. The auxiliary CATSPERB, CATSPERG, CATSPERD and CATSPERE subunits form a pavilion-like structure over the pore which stabilizes the complex through interactions with CATSPER4, CATSPER3, CATSPER1 and CATSPER2 respectively. TMEM262/CATSPERH interacts with CATSPERB, further stabilizing the complex. C2CD6/CATSPERT interacts at least with CATSPERD and is required for targeting the CatSper complex in the flagellar membrane. Interacts with Ca(v)3.3/CACNA1I, leading to suppression of T-type calcium channel activity. In terms of tissue distribution, testis-specific.

The protein localises to the cell projection. The protein resides in the cilium. It localises to the flagellum membrane. It carries out the reaction Ca(2+)(in) = Ca(2+)(out). Its activity is regulated as follows. The CatSper calcium channel is indirectly activated by extracellular progesterone and prostaglandins following the sequence: progesterone &gt; PGF1-alpha = PGE1 &gt; PGA1 &gt; PGE2 &gt;&gt; PGD2. The CatSper calcium channel is directly inhibited by endocannabinoid 2-arachidonoylglycerol (2AG). Indirect activation by progesterone takes place via the following mechanism: progesterone binds and activates the acylglycerol lipase ABHD2, which in turn mediates hydrolysis of 2AG inhibitor, relieving inhibition of the CatSper channel. The primary effect of progesterone activation is to shift voltage dependence towards more physiological, negative membrane potentials; it is not mediated by metabotropic receptors and second messengers. Sperm capacitation enhances the effect of progesterone by providing additional negative shift. Also activated by the elevation of intracellular pH. Pore-forming subunit of the CatSper complex, a sperm-specific voltage-gated calcium channel, that plays a central role in calcium-dependent physiological responses essential for successful fertilization, such as sperm hyperactivation, acrosome reaction and chemotaxis towards the oocyte. In Homo sapiens (Human), this protein is Cation channel sperm-associated protein 2 (CATSPER2).